Consider the following 639-residue polypeptide: MKLITILLLCSRLLPSLAQEEDAQEMDCNDESLFQAVDTALKKYNAGLKSGNQFVLYQVTEGTKKDGSKTFYSFKYQIKEGNCSVQSGFAWQDCDFKDAEEAATGECTATLEKRRNNKFSIATQICNITPGKGPIVTNEYHCLGCMHPISVDSPELGPVLKHAVEHFNNNTKHTHLFALGEVKSADRQVVAGMNYQIIYSIVQTNCSKEDFPSLHEDCVPLPSGDDGECKGNAFVDIHKTIAGFSDSCEFYPGDDLFELLPEDCPGCPRNIPVDSPELKEALGHSIAQLNAENNHTFYFKIDTVKKATSQVVAGTKYVIEFIARETKCSKESNAELTADCETKRLGQSLNCNANVYMRPWENKVVPTVKCKVLDMTSVIRRPPGFSPFRAPRVKKPKESTTVSPSYIARVQEERDPGNEQGPIHGHGWLHAKQIKNKNHQGHKHGHGIGHGHQKPHGLGHGHQLKLDDLKQQREDGYDHRHPVGHGHGQRHGHGHGHGHGRDKHTNKDKNNVKHTDQRRAPLTSSSEDNTTSTQIQGRTEGFTLNPPLAQPAVISRGFQDSGFTEGVIATTSPYDTETHDDLIPDIHVQPDSLSFKLISDFPEATSHKCPGRPWKPVSRKDPTIETTEFSDFDLLDALS.

Positions 1-18 are cleaved as a signal peptide; that stretch reads MKLITILLLCSRLLPSLA. The Cystatin kininogen-type 1 domain occupies 28 to 132; sequence CNDESLFQAV…TQICNITPGK (105 aa). 9 disulfides stabilise this stretch: cysteine 28-cysteine 609, cysteine 83-cysteine 94, cysteine 107-cysteine 126, cysteine 142-cysteine 145, cysteine 206-cysteine 218, cysteine 229-cysteine 248, cysteine 264-cysteine 267, cysteine 328-cysteine 340, and cysteine 351-cysteine 370. Asparagine 82 carries N-linked (GlcNAc...) asparagine glycosylation. The Cystatin kininogen-type 2 domain occupies 151–254; that stretch reads VDSPELGPVL…SDSCEFYPGD (104 aa). 2 N-linked (GlcNAc...) asparagine glycosylation sites follow: asparagine 169 and asparagine 205. Positions 273-376 constitute a Cystatin kininogen-type 3 domain; that stretch reads VDSPELKEAL…TVKCKVLDMT (104 aa). Asparagine 294 is a glycosylation site (N-linked (GlcNAc...) asparagine). At serine 332 the chain carries Phosphoserine. Disordered regions lie at residues 438–462 and 476–547; these read NHQG…GHGH and GYDH…LNPP. Over residues 482-502 the composition is skewed to basic residues; that stretch reads PVGHGHGQRHGHGHGHGHGRD. Residues 503–519 show a composition bias toward basic and acidic residues; it reads KHTNKDKNNVKHTDQRR. Polar residues predominate over residues 522-537; that stretch reads LTSSSEDNTTSTQIQG. Residue asparagine 529 is glycosylated (N-linked (GlcNAc...) asparagine).

In terms of processing, bradykinin is released from kininogen by plasma kallikrein. Post-translationally, phosphorylated by FAM20C in the extracellular medium. Bradykinin is inactivated by ACE, which removes the dipeptide Arg-Phe from its C-terminus. In terms of tissue distribution, plasma.

The protein localises to the secreted. The protein resides in the extracellular space. Functionally, kininogens are inhibitors of thiol proteases. HMW-kininogen plays an important role in blood coagulation by helping to position optimally prekallikrein and factor XI next to factor XII; HMW-kininogen inhibits the thrombin- and plasmin-induced aggregation of thrombocytes. LMW-kininogen inhibits the aggregation of thrombocytes. LMW-kininogen is in contrast to HMW-kininogen not involved in blood clotting. The active peptide bradykinin is a potent vasodilatator that is released from HMW-kininogen shows a variety of physiological effects: (A) influence in smooth muscle contraction, (B) induction of hypotension, (C) natriuresis and diuresis, (D) decrease in blood glucose level, (E) it is a mediator of inflammation and causes (E1) increase in vascular permeability, (E2) stimulation of nociceptors (4E3) release of other mediators of inflammation (e.g. prostaglandins), (F) it has a cardioprotective effect (directly via bradykinin action, indirectly via endothelium-derived relaxing factor action). The chain is Kininogen-1 (Kng1) from Rattus norvegicus (Rat).